The primary structure comprises 362 residues: PDZ and LIM domain protein 3 (362 aa).

The region spanning 1–84 (MPQNVVLPGP…QLCLKIDRAE (84 aa)) is the PDZ domain. A phosphoserine mark is found at Ser-18, Ser-92, and Ser-263. A disordered region spans residues 261-282 (DGSDDRPAGTRSVRPVTKVHGG). The 60-residue stretch at 290–349 (PLCDKCGSGIVGAVVKARDKYRHPECFVCADCNLNLKQKGYFFVEGELYCEMHARARTRP) folds into the LIM zinc-binding domain.

As to quaternary structure, interacts with ACTN2. Forms a heterodimer with PDLIM4 (via LIM domain). Highly expressed in skeletal muscle and at low levels in the heart.

It is found in the cytoplasm. The protein localises to the myofibril. Its subcellular location is the sarcomere. It localises to the z line. May play a role in the organization of actin filament arrays within muscle cells. The polypeptide is PDZ and LIM domain protein 3 (Pdlim3) (Rattus norvegicus (Rat)).